Reading from the N-terminus, the 500-residue chain is Aspartyl/glutamyl-tRNA(Asn/Gln) amidotransferase subunit B (500 aa).

This sequence belongs to the GatB/GatE family. GatB subfamily. As to quaternary structure, heterotrimer of A, B and C subunits.

It catalyses the reaction L-glutamyl-tRNA(Gln) + L-glutamine + ATP + H2O = L-glutaminyl-tRNA(Gln) + L-glutamate + ADP + phosphate + H(+). The enzyme catalyses L-aspartyl-tRNA(Asn) + L-glutamine + ATP + H2O = L-asparaginyl-tRNA(Asn) + L-glutamate + ADP + phosphate + 2 H(+). Functionally, allows the formation of correctly charged Asn-tRNA(Asn) or Gln-tRNA(Gln) through the transamidation of misacylated Asp-tRNA(Asn) or Glu-tRNA(Gln) in organisms which lack either or both of asparaginyl-tRNA or glutaminyl-tRNA synthetases. The reaction takes place in the presence of glutamine and ATP through an activated phospho-Asp-tRNA(Asn) or phospho-Glu-tRNA(Gln). The protein is Aspartyl/glutamyl-tRNA(Asn/Gln) amidotransferase subunit B of Clavibacter michiganensis subsp. michiganensis (strain NCPPB 382).